The sequence spans 337 residues: Pyrophosphate--fructose 6-phosphate 1-phosphotransferase (337 aa).

Gly10 provides a ligand contact to diphosphate. Residue Asp101 participates in Mg(2+) binding. Substrate contacts are provided by residues 124–126 (TID), Arg161, 168–170 (MGR), Glu220, Arg257, and 263–266 (HTIR). Asp126 (proton acceptor) is an active-site residue.

Belongs to the phosphofructokinase type A (PFKA) family. Mixed-substrate PFK group III subfamily. Homodimer or homotrimer. Mg(2+) serves as cofactor.

It is found in the cytoplasm. The catalysed reaction is beta-D-fructose 6-phosphate + diphosphate = beta-D-fructose 1,6-bisphosphate + phosphate + H(+). It participates in carbohydrate degradation; glycolysis; D-glyceraldehyde 3-phosphate and glycerone phosphate from D-glucose: step 3/4. With respect to regulation, non-allosteric. Its function is as follows. Catalyzes the phosphorylation of D-fructose 6-phosphate, the first committing step of glycolysis. Uses inorganic phosphate (PPi) as phosphoryl donor instead of ATP like common ATP-dependent phosphofructokinases (ATP-PFKs), which renders the reaction reversible, and can thus function both in glycolysis and gluconeogenesis. Consistently, PPi-PFK can replace the enzymes of both the forward (ATP-PFK) and reverse (fructose-bisphosphatase (FBPase)) reactions. The chain is Pyrophosphate--fructose 6-phosphate 1-phosphotransferase from Thermoproteus tenax (strain ATCC 35583 / DSM 2078 / JCM 9277 / NBRC 100435 / Kra 1).